We begin with the raw amino-acid sequence, 349 residues long: Phosphoribosylformylglycinamidine cyclo-ligase (349 aa).

This sequence belongs to the AIR synthase family.

The protein localises to the cytoplasm. The enzyme catalyses 2-formamido-N(1)-(5-O-phospho-beta-D-ribosyl)acetamidine + ATP = 5-amino-1-(5-phospho-beta-D-ribosyl)imidazole + ADP + phosphate + H(+). The protein operates within purine metabolism; IMP biosynthesis via de novo pathway; 5-amino-1-(5-phospho-D-ribosyl)imidazole from N(2)-formyl-N(1)-(5-phospho-D-ribosyl)glycinamide: step 2/2. The polypeptide is Phosphoribosylformylglycinamidine cyclo-ligase (Listeria monocytogenes serovar 1/2a (strain ATCC BAA-679 / EGD-e)).